A 324-amino-acid polypeptide reads, in one-letter code: G patch domain-containing protein 4 (324 aa).

2 disordered regions span residues 1-30 and 123-324; these read MSAS…GKGL and LSGG…NKSE. The G-patch domain occupies 11-57; that stretch reads GMKFAEEQMHKHGWKEGKGLGRRENGICEAIKVKVKCDHAGVGHNSA. The span at 14 to 30 shows a compositional bias: basic and acidic residues; the sequence is FAEEQMHKHGWKEGKGL. The span at 131–141 shows a compositional bias: low complexity; it reads KEPSSSESSDS. The span at 186–215 shows a compositional bias: basic and acidic residues; that stretch reads SRLEEQEREFLAKYGKKEQKNKERDEKLER. The span at 244-253 shows a compositional bias: basic residues; sequence HKKKKKKRKR. Positions 254-270 are enriched in basic and acidic residues; the sequence is ADSERKEESQENGHEEE. Residues 296-309 are compositionally biased toward polar residues; it reads PSTQEEQPTESSDF. The segment covering 312–324 has biased composition (basic residues); the sequence is KPKKKKKKKNKSE.

In Xenopus laevis (African clawed frog), this protein is G patch domain-containing protein 4 (gpatch4).